We begin with the raw amino-acid sequence, 298 residues long: Putative olfactory receptor 10D4 (298 aa).

The Extracellular segment spans residues 1-23; the sequence is MRNHTMVTEFILLGIPETEGLET. The N-linked (GlcNAc...) asparagine glycan is linked to asparagine 3. Residues 24 to 44 form a helical membrane-spanning segment; the sequence is ALLFLFSSFYLCTLLGNVLIL. The Cytoplasmic portion of the chain corresponds to 45 to 52; the sequence is TAIISSTR. The chain crosses the membrane as a helical span at residues 53 to 73; sequence LHTPMYFFLGNLSIFDLGFSS. Residues 74 to 97 are Extracellular-facing; it reads TTVPKMLFYLSGNSHAISYAGCVS. Cysteine 95 and cysteine 187 form a disulfide bridge. Residues 98–118 traverse the membrane as a helical segment; it reads QLFFYHFLGCTECFLYTVMAC. Residues 119–137 are Cytoplasmic-facing; sequence DRFVAICFPLRYTVIMNHR. The chain crosses the membrane as a helical span at residues 138-158; the sequence is VCFMLATGTWMIGCVHAMILT. Residues 159–195 lie on the Extracellular side of the membrane; it reads PLTFQLPYCGPNKVGYYFCDIPAVLPLACKDTSLAQR. Residues 196–215 form a helical membrane-spanning segment; it reads VGFTNVGLLSLICFFLILVS. The Cytoplasmic segment spans residues 216-235; the sequence is YTCIGISISKIRSAEGRQRA. A helical transmembrane segment spans residues 236–256; that stretch reads FSTCSAHLTAILCAYGPVIVI. The Extracellular segment spans residues 257–267; it reads YLQPNPSALLG. A helical transmembrane segment spans residues 268–288; sequence SIIQILNNLVTPMLNPLIYSL. The Cytoplasmic portion of the chain corresponds to 289 to 298; it reads RNKDVKSDQP.

It belongs to the G-protein coupled receptor 1 family.

It is found in the cell membrane. Its function is as follows. Odorant receptor. The chain is Putative olfactory receptor 10D4 (OR10D4P) from Homo sapiens (Human).